Consider the following 81-residue polypeptide: Putative membrane protein insertion efficiency factor (81 aa).

It belongs to the UPF0161 family.

It is found in the cell inner membrane. Its function is as follows. Could be involved in insertion of integral membrane proteins into the membrane. The polypeptide is Putative membrane protein insertion efficiency factor (Thermotoga maritima (strain ATCC 43589 / DSM 3109 / JCM 10099 / NBRC 100826 / MSB8)).